A 139-amino-acid polypeptide reads, in one-letter code: Angiogenin (139 aa).

Residues 1–21 form the signal peptide; the sequence is MAMSSLWWTAILLLALTVSMC. His-34 functions as the Proton acceptor in the catalytic mechanism. 3 cysteine pairs are disulfide-bonded: Cys-49–Cys-102, Cys-64–Cys-111, and Cys-82–Cys-126. Residues Cys-102 and Val-122 each contribute to the tRNA site. Residue His-133 is the Proton donor of the active site.

The protein belongs to the pancreatic ribonuclease family. In terms of assembly, homodimer. Interacts with RNH1; inhibiting ANG ribonuclease activity.

It is found in the secreted. The protein localises to the nucleus. The protein resides in the nucleolus. It localises to the cytoplasm. Its subcellular location is the stress granule. Secreted ribonuclease that can either promote or restrict cell proliferation of target cells, depending on the context. Endocytosed in target cells via its receptor PLXNB2 and translocates to the cytoplasm or nucleus. Under stress conditions, localizes to the cytoplasm and promotes the assembly of stress granules (SGs): specifically cleaves a subset of tRNAs within anticodon loops to produce tRNA-derived stress-induced fragments (tiRNAs), resulting in translation repression and inhibition of cell proliferation. tiRNas also prevent formation of apoptosome, thereby promoting cell survival. Preferentially cleaves RNAs between a pyrimidine and an adenosine residue, suggesting that it cleaves the anticodon loop of tRNA(Ala) (32-UUAGCAU-38) after positions 33 and 36. Cleaves a subset of tRNAs, including tRNA(Ala), tRNA(Glu), tRNA(Gly), tRNA(Lys), tRNA(Val), tRNA(His), tRNA(Asp) and tRNA(Sec). Under growth conditions and in differentiated cells, translocates to the nucleus and stimulates ribosomal RNA (rRNA) transcription, including that containing the initiation site sequences of 45S rRNA, thereby promoting cell growth and proliferation. Angiogenin induces vascularization of normal and malignant tissues via its ability to promote rRNA transcription. This is Angiogenin (ANG) from Gallus gallus (Chicken).